Reading from the N-terminus, the 204-residue chain is Imidazoleglycerol-phosphate dehydratase (204 aa).

This sequence belongs to the imidazoleglycerol-phosphate dehydratase family.

The protein resides in the cytoplasm. The enzyme catalyses D-erythro-1-(imidazol-4-yl)glycerol 3-phosphate = 3-(imidazol-4-yl)-2-oxopropyl phosphate + H2O. The protein operates within amino-acid biosynthesis; L-histidine biosynthesis; L-histidine from 5-phospho-alpha-D-ribose 1-diphosphate: step 6/9. This chain is Imidazoleglycerol-phosphate dehydratase, found in Corynebacterium urealyticum (strain ATCC 43042 / DSM 7109).